The primary structure comprises 208 residues: Guanylate kinase (208 aa).

In terms of domain architecture, Guanylate kinase-like spans 4 to 181 (GLLIVISGPS…AVEKIQSIIS (178 aa)). 11–18 (GPSGTGKG) is an ATP binding site.

It belongs to the guanylate kinase family.

The protein localises to the cytoplasm. It carries out the reaction GMP + ATP = GDP + ADP. Functionally, essential for recycling GMP and indirectly, cGMP. The sequence is that of Guanylate kinase from Clostridium tetani (strain Massachusetts / E88).